A 325-amino-acid chain; its full sequence is Nod factor export ATP-binding protein I (325 aa).

An ABC transporter domain is found at leucine 27–tyrosine 257. Glycine 59–threonine 66 contacts ATP.

It belongs to the ABC transporter superfamily. Lipooligosaccharide exporter (TC 3.A.1.102) family. As to quaternary structure, the complex is composed of two ATP-binding proteins (NodI) and two transmembrane proteins (NodJ).

The protein localises to the cell inner membrane. Part of the ABC transporter complex NodIJ involved in the export of the nodulation factors (Nod factors), the bacterial signal molecules that induce symbiosis and subsequent nodulation induction. Nod factors are LCO (lipo-chitin oligosaccharide), a modified beta-1,4-linked N-acetylglucosamine oligosaccharide. This subunit is responsible for energy coupling to the transport system. This chain is Nod factor export ATP-binding protein I, found in Cupriavidus pinatubonensis (strain JMP 134 / LMG 1197) (Cupriavidus necator (strain JMP 134)).